A 93-amino-acid polypeptide reads, in one-letter code: YcgL domain-containing protein AHA_2135 (93 aa).

Residues 1-85 (MLCAVYKSRK…PPENLLEQHK (85 aa)) form the YcgL domain.

The protein is YcgL domain-containing protein AHA_2135 of Aeromonas hydrophila subsp. hydrophila (strain ATCC 7966 / DSM 30187 / BCRC 13018 / CCUG 14551 / JCM 1027 / KCTC 2358 / NCIMB 9240 / NCTC 8049).